Reading from the N-terminus, the 183-residue chain is Archaemetzincin (183 aa).

His132 contributes to the Zn(2+) binding site. Glu133 acts as the Proton acceptor in catalysis. Positions 136, 142, 143, 148, 167, and 170 each coordinate Zn(2+).

This sequence belongs to the peptidase M54 family. As to quaternary structure, monomer. Requires Zn(2+) as cofactor.

In terms of biological role, probable zinc metalloprotease whose natural substrate is unknown. In Aeropyrum pernix (strain ATCC 700893 / DSM 11879 / JCM 9820 / NBRC 100138 / K1), this protein is Archaemetzincin.